Consider the following 280-residue polypeptide: Transcription factor MYB46 (280 aa).

2 HTH myb-type domains span residues 15–67 and 68–122; these read VKKM…INYL and RPDL…KKRL. 2 consecutive DNA-binding regions (H-T-H motif) follow at residues 43–67 and 95–118; these read WSDV…INYL and WSQI…NSTI. The disordered stretch occupies residues 129–150; sequence SNLINNSSSSPNTASDSSSNSA.

As to expression, expressed at low levels in stems and siliques, specifically in xylem.

The protein localises to the nucleus. Its function is as follows. Transcription activator. Involved in the regulation of secondary wall biosynthesis in fibers and vessels. Transcription activator of the mannan synthase CSLA9 that recognizes and binds to the DNA consensus sequence 5'-[AG][GT]T[AT]GGT[GA]-3' cis-regulatory element of CSLA9 promoter. Transcription factor that acts as a molecular switch in the NAC012/SND1-mediated transcriptional network regulating secondary wall biosynthesis. Is directly activated by NAC012/SND1. Functions redundantly with MYB83 in the transcriptional regulatory cascade leading to secondary wall formation in fibers and vessels. Transcription activator that binds to the DNA consensus sequence 5'-ACC[AT]A[AC][TC]-3', designated as the secondary wall MYB-responsive element (SMRE). Regulates directly numerous transcription factors and a number of genes involved in secondary wall biosynthesis that contain SMRE elements in their promoters. Is an obligate component of the transcriptional regulatory complex toward the commitment of secondary wall cellulose synthesis. Is required for functional expression of the three secondary wall CESA genes, CESA4, CESA7 and CESA8. The chain is Transcription factor MYB46 from Arabidopsis thaliana (Mouse-ear cress).